A 274-amino-acid polypeptide reads, in one-letter code: Type III pantothenate kinase (274 aa).

6–13 (DVGNTNTV) contributes to the ATP binding site. Residues Tyr110 and 117-120 (GADR) each bind substrate. Residue Asp119 is the Proton acceptor of the active site. Asp139 contacts K(+). Thr142 serves as a coordination point for ATP. Thr194 provides a ligand contact to substrate.

It belongs to the type III pantothenate kinase family. In terms of assembly, homodimer. It depends on NH4(+) as a cofactor. K(+) is required as a cofactor.

Its subcellular location is the cytoplasm. The enzyme catalyses (R)-pantothenate + ATP = (R)-4'-phosphopantothenate + ADP + H(+). The protein operates within cofactor biosynthesis; coenzyme A biosynthesis; CoA from (R)-pantothenate: step 1/5. Catalyzes the phosphorylation of pantothenate (Pan), the first step in CoA biosynthesis. This chain is Type III pantothenate kinase, found in Koribacter versatilis (strain Ellin345).